We begin with the raw amino-acid sequence, 165 residues long: Aspartate carbamoyltransferase regulatory chain (165 aa).

Cysteine 121, cysteine 126, cysteine 149, and cysteine 152 together coordinate Zn(2+).

This sequence belongs to the PyrI family. In terms of assembly, contains catalytic and regulatory chains. The cofactor is Zn(2+).

In terms of biological role, involved in allosteric regulation of aspartate carbamoyltransferase. In Methanoregula boonei (strain DSM 21154 / JCM 14090 / 6A8), this protein is Aspartate carbamoyltransferase regulatory chain.